Reading from the N-terminus, the 144-residue chain is MLMPKRVKYRREHRGKMRGRAKGGTEIAFGEFGLQALAASWITNRQIEAARRAMTRHMKRGGKVWIKIFPSKPYTAKPLEVRMGSGKGAPEGWVAVVKPGKIMFEIAGVSEEVAREALRLAAHKLPVKCKFVKREENGGESNEN.

Belongs to the universal ribosomal protein uL16 family. In terms of assembly, part of the 50S ribosomal subunit.

In terms of biological role, binds 23S rRNA and is also seen to make contacts with the A and possibly P site tRNAs. The protein is Large ribosomal subunit protein uL16 of Bacillus mycoides (strain KBAB4) (Bacillus weihenstephanensis).